Consider the following 259-residue polypeptide: UPF0246 protein Pmen_1032 (259 aa).

It belongs to the UPF0246 family.

The chain is UPF0246 protein Pmen_1032 from Ectopseudomonas mendocina (strain ymp) (Pseudomonas mendocina).